We begin with the raw amino-acid sequence, 171 residues long: MQNKRDSYTREDLLASSQGELWPQGPQLPAPNMLMMDRITKMSETEGDFGKGLILAELDITPDLWFFDCHFPGDPVMPGCLGLDAMWQLVGFFLGWVGGKGKGRALGVGEVKFTGQILPTAKKVTYEIHMKRVVNRKLVMGLADGRVCVDGKEIYVAKDLKVGLFQDTSSF.

Residue histidine 70 is part of the active site.

The protein belongs to the thioester dehydratase family. FabA subfamily. As to quaternary structure, homodimer.

The protein localises to the cytoplasm. It carries out the reaction a (3R)-hydroxyacyl-[ACP] = a (2E)-enoyl-[ACP] + H2O. The enzyme catalyses (3R)-hydroxydecanoyl-[ACP] = (2E)-decenoyl-[ACP] + H2O. The catalysed reaction is (2E)-decenoyl-[ACP] = (3Z)-decenoyl-[ACP]. The protein operates within lipid metabolism; fatty acid biosynthesis. Its function is as follows. Necessary for the introduction of cis unsaturation into fatty acids. Catalyzes the dehydration of (3R)-3-hydroxydecanoyl-ACP to E-(2)-decenoyl-ACP and then its isomerization to Z-(3)-decenoyl-ACP. Can catalyze the dehydratase reaction for beta-hydroxyacyl-ACPs with saturated chain lengths up to 16:0, being most active on intermediate chain length. The polypeptide is 3-hydroxydecanoyl-[acyl-carrier-protein] dehydratase (Vibrio campbellii (strain ATCC BAA-1116)).